Reading from the N-terminus, the 389-residue chain is tRNA(Met) cytidine acetate ligase (389 aa).

Residues 8-21 (IAEF…HEYL), glycine 97, asparagine 153, and arginine 176 each bind ATP.

Belongs to the TmcAL family.

Its subcellular location is the cytoplasm. The enzyme catalyses cytidine(34) in elongator tRNA(Met) + acetate + ATP = N(4)-acetylcytidine(34) in elongator tRNA(Met) + AMP + diphosphate. Its function is as follows. Catalyzes the formation of N(4)-acetylcytidine (ac(4)C) at the wobble position of elongator tRNA(Met), using acetate and ATP as substrates. First activates an acetate ion to form acetyladenylate (Ac-AMP) and then transfers the acetyl group to tRNA to form ac(4)C34. The sequence is that of tRNA(Met) cytidine acetate ligase from Lactococcus lactis subsp. cremoris (strain SK11).